Consider the following 22-residue polypeptide: Putative lactoylglutathione lyase (22 aa).

The disordered stretch occupies residues 1 to 22; it reads ITACLDPDGWKEPGPLPGISTK. Residue E12 is the Proton donor/acceptor of the active site.

It belongs to the glyoxalase I family. Zn(2+) is required as a cofactor.

It catalyses the reaction (R)-S-lactoylglutathione = methylglyoxal + glutathione. The protein operates within secondary metabolite metabolism; methylglyoxal degradation; (R)-lactate from methylglyoxal: step 1/2. Catalyzes the conversion of hemimercaptal, formed from methylglyoxal and glutathione, to S-lactoylglutathione. This is Putative lactoylglutathione lyase from Pinus strobus (Eastern white pine).